Here is a 1996-residue protein sequence, read N- to C-terminus: Protein Shroom3 (1996 aa).

A PDZ domain is found at 25 to 110; it reads YIYLEAFLEG…TLRLVVRRDV (86 aa). Residues 150–173 are disordered; it reads KHRRSEPAGRPHSWHTTKSGEKQP. Phosphoserine is present on Ser-213. 5 disordered regions span residues 340-389, 437-468, 568-629, 673-772, and 788-1053; these read NGQG…PARS, EKSPENSPPVKPKHNYTQKAQPGQPLLPTSIY, DASL…WEGD, RRHS…LQGF, and FEQR…PESS. Phosphoserine is present on residues Ser-439 and Ser-443. Positions 700–718 are enriched in basic and acidic residues; that stretch reads KAEDPGRKAAPDLGSHLDR. A compositionally biased stretch (low complexity) spans 750–768; that stretch reads HPHTSSLGRRGPGPGSASA. Over residues 814-823 the composition is skewed to polar residues; that stretch reads TVSTSSTSGN. The residue at position 816 (Ser-816) is a Phosphoserine. Composition is skewed to basic and acidic residues over residues 826-836 and 846-859; these read EETKAHIRFSE and QHFKNGELKLEEAS. Polar residues-rich tracts occupy residues 862–871 and 887–896; these read PCGQQLSGGA and RSQSTFQLSS. Ser-890 bears the Phosphoserine mark. The segment covering 897 to 909 has biased composition (basic and acidic residues); that stretch reads EPEREPEWRDRPG. 2 positions are modified to phosphoserine: Ser-910 and Ser-913. Positions 928 to 1030 constitute an ASD1 domain; that stretch reads IKDAQSRVLG…SEPEKMNEVG (103 aa). Over residues 950–964 the composition is skewed to low complexity; the sequence is APVASRSWRPRPSSA. Phosphoserine is present on Ser-970. A compositionally biased stretch (basic and acidic residues) spans 1011 to 1027; it reads LTPEQKKRSYSEPEKMN. Phosphoserine occurs at positions 1069 and 1072. Disordered stretches follow at residues 1093–1115, 1137–1223, 1315–1573, and 1627–1665; these read KTGKRPTSAAGCSLQEPGPLRER, SSLS…MSAE, ECPG…SFNK, and SLGGQPAPIQTQSLSHDPVSGTQGLEKKVSPDPQKSSED. The span at 1137 to 1148 shows a compositional bias: low complexity; it reads SSLSSLREPSLQ. Ser-1221 is modified (phosphoserine). Residues 1366–1375 are compositionally biased toward polar residues; the sequence is YCSQDGQTGR. Over residues 1403-1417 the composition is skewed to basic and acidic residues; the sequence is CEGDGPEHGVEEGTR. Ser-1441 carries the phosphoserine modification. Positions 1459-1472 are enriched in polar residues; the sequence is KQQSLPSLCSTSDP. The span at 1498–1515 shows a compositional bias: basic and acidic residues; sequence PPPHEDYEDEVFVRDPHP. Over residues 1524–1536 the composition is skewed to pro residues; that stretch reads EPLPPPPPPPPSQ. Polar residues predominate over residues 1634–1649; the sequence is PIQTQSLSHDPVSGTQ. Positions 1651–1665 are enriched in basic and acidic residues; it reads LEKKVSPDPQKSSED. In terms of domain architecture, ASD2 spans 1669 to 1957; it reads EALAKEIVHQ…QVKCLLESLP (289 aa).

It belongs to the shroom family. In terms of assembly, interacts with F-actin. Interacts with ROCK1.

The protein localises to the cell junction. The protein resides in the adherens junction. Its subcellular location is the cytoplasm. It is found in the cytoskeleton. It localises to the apical cell membrane. Functionally, controls cell shape changes in the neuroepithelium during neural tube closure. Induces apical constriction in epithelial cells by promoting the apical accumulation of F-actin and myosin II, and probably by bundling stress fibers. Induces apicobasal cell elongation by redistributing gamma-tubulin and directing the assembly of robust apicobasal microtubule arrays. This is Protein Shroom3 (SHROOM3) from Homo sapiens (Human).